A 186-amino-acid chain; its full sequence is Ribosome-recycling factor (186 aa).

This sequence belongs to the RRF family.

The protein localises to the cytoplasm. In terms of biological role, responsible for the release of ribosomes from messenger RNA at the termination of protein biosynthesis. May increase the efficiency of translation by recycling ribosomes from one round of translation to another. The protein is Ribosome-recycling factor of Janthinobacterium sp. (strain Marseille) (Minibacterium massiliensis).